A 984-amino-acid chain; its full sequence is Probable translation initiation factor IF-2 (984 aa).

Positions 94-215 (VNGWYSVTVT…LPLLLLRFGI (122 aa)) constitute a DOD-type homing endonuclease domain. Residues 391–608 (TTETHNFVAN…LIAGLSQKYL (218 aa)) enclose the tr-type G domain. GTP contacts are provided by residues 464 to 468 (DTPGH) and 518 to 521 (NKID).

The protein belongs to the TRAFAC class translation factor GTPase superfamily. Classic translation factor GTPase family. IF-2 subfamily. In terms of processing, this protein undergoes a protein self splicing that involves a post-translational excision of the intervening region (intein) followed by peptide ligation.

In terms of biological role, function in general translation initiation by promoting the binding of the formylmethionine-tRNA to ribosomes. Seems to function along with eIF-2. This is Probable translation initiation factor IF-2 (infB) from Pyrococcus furiosus (strain ATCC 43587 / DSM 3638 / JCM 8422 / Vc1).